The chain runs to 154 residues: MDLVQKQKSLQDYTKSLFLEGILDSQFLQLQQLQDESNPDFVSQVVTLFFQDSDRILNDLSLSLDQQVVDFKKVDPHVHQLKGSSSSIGAQRVKNACVVFRSFCEQQNVEACHRCLQQVKQEYYLVKNRLETLFKLEQQIVASGGMIPAVELGF.

N-acetylmethionine is present on Met-1. The HPt domain occupies 38-143 (NPDFVSQVVT…FKLEQQIVAS (106 aa)). Position 79 is a phosphohistidine (His-79).

In terms of assembly, interacts with the B-type response regulators ARR1, ARR2, ARR4 and ARR9. Binds to ETR1, AHK2, AHK3, AHK4, AHK5 and FBR12. In terms of processing, two-component system major event consists of a His-to-Asp phosphorelay between a sensor histidine kinase (HK) and a response regulator (RR). In plants, the His-to-Asp phosphorelay involves an additional intermediate named Histidine-containing phosphotransfer protein (HPt). This multistep phosphorelay consists of a His-Asp-His-Asp sequential transfer of a phosphate group between first a His and an Asp of the HK protein, followed by the transfer to a conserved His of the HPt protein and finally the transfer to an Asp in the receiver domain of the RR protein. In terms of tissue distribution, strongly expressed in roots.

The protein resides in the cytoplasm. It is found in the cytosol. The protein localises to the nucleus. In terms of biological role, functions as a two-component phosphorelay mediators between cytokinin sensor histidine kinases and response regulator (B-type ARRs). Plays an important role in propagating cytokinin signal transduction through the multistep His-to-Asp phosphorelay. The polypeptide is Histidine-containing phosphotransfer protein 1 (AHP1) (Arabidopsis thaliana (Mouse-ear cress)).